Here is a 418-residue protein sequence, read N- to C-terminus: Aspartate aminotransferase, cytoplasmic (418 aa).

Serine 2 carries the N-acetylserine modification. L-aspartate is bound by residues glycine 38, tryptophan 135, and asparagine 188. The residue at position 255 (lysine 255) is an N6-(pyridoxal phosphate)lysine. Residue arginine 387 coordinates L-aspartate. A Phosphoserine modification is found at serine 389.

Belongs to the class-I pyridoxal-phosphate-dependent aminotransferase family. In terms of assembly, homodimer. Pyridoxal 5'-phosphate is required as a cofactor.

It is found in the cytoplasm. The protein localises to the peroxisome. The enzyme catalyses L-aspartate + 2-oxoglutarate = oxaloacetate + L-glutamate. Its function is as follows. Plays a key role in amino acid metabolism. The chain is Aspartate aminotransferase, cytoplasmic (AAT2) from Saccharomyces cerevisiae (strain ATCC 204508 / S288c) (Baker's yeast).